Consider the following 529-residue polypeptide: Phosphoenolpyruvate carboxykinase (ATP) (529 aa).

Residue arginine 52 participates in substrate binding. Ca(2+) is bound by residues arginine 130, asparagine 131, and phenylalanine 133. Substrate-binding residues include tyrosine 191 and lysine 197. ATP contacts are provided by residues lysine 197, histidine 216, and 232–240 (GLSGTGKTT). Mn(2+) is bound by residues lysine 197 and histidine 216. Aspartate 253 provides a ligand contact to Mn(2+). A Ca(2+)-binding site is contributed by glycine 267. ATP contacts are provided by residues glutamate 281, arginine 319, 438-439 (RF), phenylalanine 439, and threonine 444. Residue arginine 319 participates in substrate binding.

The protein belongs to the phosphoenolpyruvate carboxykinase (ATP) family. In terms of assembly, dimer of dimers. The cofactor is Mn(2+).

It is found in the cytoplasm. It carries out the reaction oxaloacetate + ATP = phosphoenolpyruvate + ADP + CO2. It participates in carbohydrate biosynthesis; gluconeogenesis. With respect to regulation, allosterically activated by calcium. Its function is as follows. Involved in gluconeogenesis. Catalyzes the conversion of oxaloacetate (OAA) to phosphoenolpyruvate (PEP) through direct phosphoryl transfer between the nucleoside triphosphate and OAA. In Thermus thermophilus (strain ATCC 27634 / DSM 579 / HB8), this protein is Phosphoenolpyruvate carboxykinase (ATP).